We begin with the raw amino-acid sequence, 184 residues long: NADH-quinone oxidoreductase subunit B (184 aa).

[4Fe-4S] cluster is bound by residues Cys-63, Cys-64, Cys-128, and Cys-158.

The protein belongs to the complex I 20 kDa subunit family. As to quaternary structure, NDH-1 is composed of 14 different subunits. Subunits NuoB, C, D, E, F, and G constitute the peripheral sector of the complex. [4Fe-4S] cluster serves as cofactor.

Its subcellular location is the cell inner membrane. It carries out the reaction a quinone + NADH + 5 H(+)(in) = a quinol + NAD(+) + 4 H(+)(out). NDH-1 shuttles electrons from NADH, via FMN and iron-sulfur (Fe-S) centers, to quinones in the respiratory chain. The immediate electron acceptor for the enzyme in this species is believed to be ubiquinone. Couples the redox reaction to proton translocation (for every two electrons transferred, four hydrogen ions are translocated across the cytoplasmic membrane), and thus conserves the redox energy in a proton gradient. In Xylella fastidiosa (strain M12), this protein is NADH-quinone oxidoreductase subunit B.